Here is a 236-residue protein sequence, read N- to C-terminus: MPAYKRVLLKLSGEALMGDDAFGINRSTIEGMVNDIAEIVRLGVQVAVVIGGGNIFRGVAGGAAGMDRATADYMGMLATMMNALALQDAMRHANIEGRVQSALRMDQVVEPYIRPRAIRQLEEGKVVIFAAGTGNPFFTTDTAAALRGSEIGAEIVLKATKVDGVYTADPKKDPSATRYTTISFDEAISRNLQVMDATAFALCRDQKLPIKVFSIQKPNALKRVIMGEDEGTLVHV.

Position 10–13 (10–13) interacts with ATP; that stretch reads KLSG. Residue G52 participates in UMP binding. Residues G53 and R57 each coordinate ATP. UMP contacts are provided by residues D72 and 133 to 140; that span reads TGNPFFTT. 3 residues coordinate ATP: T160, Y166, and D169.

It belongs to the UMP kinase family. In terms of assembly, homohexamer.

It localises to the cytoplasm. The catalysed reaction is UMP + ATP = UDP + ADP. The protein operates within pyrimidine metabolism; CTP biosynthesis via de novo pathway; UDP from UMP (UMPK route): step 1/1. Its activity is regulated as follows. Inhibited by UTP. Its function is as follows. Catalyzes the reversible phosphorylation of UMP to UDP. The sequence is that of Uridylate kinase from Ralstonia nicotianae (strain ATCC BAA-1114 / GMI1000) (Ralstonia solanacearum).